Consider the following 673-residue polypeptide: G-protein-signaling modulator 1 (673 aa).

Residues 1-507 (MASPAPPAAE…DLLSKFQSSR (507 aa)) form a mediates association with membranes region. TPR repeat units follow at residues 28–61 (CLEL…GTED), 66–99 (SAIY…ARTI), 106–139 (AKAS…AQEQ), 146–178 (ARAL…PPDV), 180–199 (ETLH…VKEL), 206–239 (GRAY…AKEF), 246–279 (RRAY…SRQI), 286–319 (AQAC…AQEL), and 326–359 (GRAC…SQEI). The interaction with STK11/LKB1 stretch occupies residues 361-485 (DRNGELTARM…VRVQVPRTGI (125 aa)). Phosphoserine is present on Ser410. Position 418 is an omega-N-methylarginine (Arg418). A compositionally biased stretch (basic and acidic residues) spans 420–439 (PLDREQNGETHHTGDWRGPS). The segment at 420–477 (PLDREQNGETHHTGDWRGPSRDSLPLPMRSRKYQEGPDAIERRPREGSHSPLDSADVR) is disordered. Ser442, Ser467, Ser469, Ser490, and Ser491 each carry phosphoserine. Residues 451–467 (KYQEGPDAIERRPREGS) are compositionally biased toward basic and acidic residues. Residues 493–515 (EECFFDLLSKFQSSRMDDQRCPL) form the GoLoco 1 domain. Residues 510–544 (DQRCPLEEGQAGAAEATAAPTLEERAAQPSVTASP) are disordered. Positions 516 to 530 (EEGQAGAAEATAAPT) are enriched in low complexity. A phosphoserine mark is found at Ser543 and Ser567. 3 GoLoco domains span residues 546 to 568 (TEEF…RASV), 594 to 616 (GDEF…RCPP), and 628 to 650 (DEDF…RVDL). 2 disordered regions span residues 609–628 (IDDQ…TMPD) and 645–673 (EQRV…PGAS). Residue Ser653 is modified to Phosphoserine.

It belongs to the GPSM family. As to quaternary structure, interacts with INSC/inscuteable and FRMPD1. Interacts with GNAI1, GNAI2 and GNAI3 preferentially in their GDP-bound state. May also interact with GNAO1. Interacts with STK11/LKB1 and MACF1. Post-translationally, phosphorylation regulates interaction with G(i/o) alpha. As to expression, isoform 4 is specifically expressed in brain by neurons and also detected in testis, liver, kidney, heart and pancreas (at protein level). Highly expressed in cerebellum and subventricular zone-olfactory bulb system. Isoform 2 and isoform 3 are specifically expressed in heart and are also detected in brain.

It is found in the endoplasmic reticulum membrane. Its subcellular location is the golgi apparatus membrane. It localises to the cell membrane. The protein resides in the cytoplasm. The protein localises to the cytosol. Functionally, guanine nucleotide dissociation inhibitor (GDI) which functions as a receptor-independent activator of heterotrimeric G-protein signaling. Keeps G(i/o) alpha subunit in its GDP-bound form thus uncoupling heterotrimeric G-proteins signaling from G protein-coupled receptors. Controls spindle orientation and asymmetric cell fate of cerebral cortical progenitors. May also be involved in macroautophagy in intestinal cells. May play a role in drug addiction. The sequence is that of G-protein-signaling modulator 1 (Gpsm1) from Rattus norvegicus (Rat).